A 545-amino-acid polypeptide reads, in one-letter code: O-phosphoserine--tRNA(Cys) ligase (545 aa).

Residues 189-191, 234-236, 276-277, and Asn328 each bind substrate; these read HMT, SAS, and YY.

The protein belongs to the class-II aminoacyl-tRNA synthetase family. O-phosphoseryl-tRNA(Cys) synthetase subfamily. As to quaternary structure, homotetramer. Interacts with SepCysS.

The enzyme catalyses tRNA(Cys) + O-phospho-L-serine + ATP = O-phospho-L-seryl-tRNA(Cys) + AMP + diphosphate. Functionally, catalyzes the attachment of O-phosphoserine (Sep) to tRNA(Cys). The sequence is that of O-phosphoserine--tRNA(Cys) ligase from Methanothrix thermoacetophila (strain DSM 6194 / JCM 14653 / NBRC 101360 / PT) (Methanosaeta thermophila).